Reading from the N-terminus, the 364-residue chain is Biotin synthase (364 aa).

Positions 68–303 constitute a Radical SAM core domain; it reads CCGNTVDLCS…QQILRYAGGR (236 aa). [4Fe-4S] cluster contacts are provided by cysteine 86, cysteine 90, and cysteine 93. [2Fe-2S] cluster is bound by residues cysteine 131, cysteine 168, cysteine 228, and arginine 298.

Belongs to the radical SAM superfamily. Biotin synthase family. As to quaternary structure, homodimer. It depends on [4Fe-4S] cluster as a cofactor. Requires [2Fe-2S] cluster as cofactor.

The enzyme catalyses (4R,5S)-dethiobiotin + (sulfur carrier)-SH + 2 reduced [2Fe-2S]-[ferredoxin] + 2 S-adenosyl-L-methionine = (sulfur carrier)-H + biotin + 2 5'-deoxyadenosine + 2 L-methionine + 2 oxidized [2Fe-2S]-[ferredoxin]. It participates in cofactor biosynthesis; biotin biosynthesis; biotin from 7,8-diaminononanoate: step 2/2. Its function is as follows. Catalyzes the conversion of dethiobiotin (DTB) to biotin by the insertion of a sulfur atom into dethiobiotin via a radical-based mechanism. This Microcystis aeruginosa (strain NIES-843 / IAM M-2473) protein is Biotin synthase.